The primary structure comprises 309 residues: MTDLTRVVTEIAEEMRARPDRGEVATYIPELARMDPRAFGMVVIDADGEVAAAGDCDVPFSIQSISKVFTLTLALGMVGDRLWRRVGREPSGSPFNSIVQLEYERGIPRNPFINAGAIAVTDVILSRHQPREALGEILRFLQFLAGDAAIAIDESVAASEQRTGYRNMALANFMKAHGVLDNPVPYLLGVYFHHCAIAMTCRQLAEAGRFLAHSGRHPATGHLVVQPERARRINAVMLTCGHYDGSGEFAYRVGLPGKSGVGGGILAIAPGRASIAVWSPGLDAAGNSHLGRIALEMLTKRLGWSIFGQ.

The substrate site is built by S64, N114, E160, N167, Y191, Y243, and V261.

It belongs to the glutaminase family. Homotetramer.

The enzyme catalyses L-glutamine + H2O = L-glutamate + NH4(+). This Methylobacterium sp. (strain 4-46) protein is Glutaminase.